Reading from the N-terminus, the 444-residue chain is uncharacterized protein (444 aa).

12 helical membrane-spanning segments follow: residues 2 to 22 (PILI…KVKL), 24 to 44 (TFVS…MDIN), 52 to 72 (TGIG…AMLG), 106 to 126 (FIIG…PIVY), 134 to 154 (MPFL…HGFL), 174 to 194 (VLLF…PLFN), 228 to 248 (FAIS…ATIF), 261 to 281 (IIEF…LALY), 305 to 325 (IAMM…LIDG), 343 to 363 (LFVA…ATVA), 377 to 397 (AGSV…VIAC), and 424 to 444 (LLTT…GLVM).

Belongs to the GntP permease family.

Its subcellular location is the cell membrane. This is an uncharacterized protein from Bacillus subtilis (strain 168).